A 109-amino-acid chain; its full sequence is ATP-dependent Clp protease adapter protein ClpS (109 aa).

Positions 1-25 are disordered; it reads MSERKEGDSGAGVRSAVITQTKPKT.

This sequence belongs to the ClpS family. In terms of assembly, binds to the N-terminal domain of the chaperone ClpA.

Its function is as follows. Involved in the modulation of the specificity of the ClpAP-mediated ATP-dependent protein degradation. This Phenylobacterium zucineum (strain HLK1) protein is ATP-dependent Clp protease adapter protein ClpS.